A 306-amino-acid chain; its full sequence is MELQEYELITVLGPTASGKTAFATRLANELNSEIISADSRQVYRNMTIGTGKDLDNYIIEGKFIPYHLIDICQAGEKYNVFRFQHDFHEIFTKIKKKGKLPILCGGTGLYIESVLKGYKLLDVPENLILRSNLKDKSVDELKKILKSYKNLHNQTDTDSVRKIIRAIEIETCYPTQKNNPINSYSSIKSLIIGVNIDRELRRNRISLRLKKRLEEGMIEEVKNLLETELSPDQLIYYGLEYKYITLYLIGQLSYSEMYQQLEIAIHQYAKRQMTWFRGMERRGFKIHWIDVYEMNHLNEIFNRIHF.

13–20 (GPTASGKT) provides a ligand contact to ATP. 15–20 (TASGKT) lines the substrate pocket. The segment at 38 to 41 (DSRQ) is interaction with substrate tRNA.

It belongs to the IPP transferase family. Monomer. It depends on Mg(2+) as a cofactor.

It carries out the reaction adenosine(37) in tRNA + dimethylallyl diphosphate = N(6)-dimethylallyladenosine(37) in tRNA + diphosphate. Its function is as follows. Catalyzes the transfer of a dimethylallyl group onto the adenine at position 37 in tRNAs that read codons beginning with uridine, leading to the formation of N6-(dimethylallyl)adenosine (i(6)A). The sequence is that of tRNA dimethylallyltransferase 1 from Azobacteroides pseudotrichonymphae genomovar. CFP2.